The following is a 98-amino-acid chain: NADH-ubiquinone oxidoreductase chain 4L (98 aa).

3 helical membrane-spanning segments follow: residues 1–21 (MSPILINMLLAFTISLIGLLI), 30–50 (LLCLEGMMLSLFILTSTLALT), and 61–81 (IILLVFAACEAAIGLSLLVMV).

This sequence belongs to the complex I subunit 4L family. As to quaternary structure, core subunit of respiratory chain NADH dehydrogenase (Complex I) which is composed of 45 different subunits.

It is found in the mitochondrion inner membrane. It catalyses the reaction a ubiquinone + NADH + 5 H(+)(in) = a ubiquinol + NAD(+) + 4 H(+)(out). Core subunit of the mitochondrial membrane respiratory chain NADH dehydrogenase (Complex I) which catalyzes electron transfer from NADH through the respiratory chain, using ubiquinone as an electron acceptor. Part of the enzyme membrane arm which is embedded in the lipid bilayer and involved in proton translocation. The protein is NADH-ubiquinone oxidoreductase chain 4L (MT-ND4L) of Chrysochloris asiatica (Cape golden mole).